The chain runs to 677 residues: Methionine--tRNA ligase (677 aa).

The 'HIGH' region motif lies at P15–H25. Residues C146, C149, C159, and C162 each contribute to the Zn(2+) site. Positions K333–S337 match the 'KMSKS' region motif. K336 is an ATP binding site. The tRNA-binding domain maps to D575–K677.

Belongs to the class-I aminoacyl-tRNA synthetase family. MetG type 1 subfamily. Homodimer. Requires Zn(2+) as cofactor.

Its subcellular location is the cytoplasm. It catalyses the reaction tRNA(Met) + L-methionine + ATP = L-methionyl-tRNA(Met) + AMP + diphosphate. In terms of biological role, is required not only for elongation of protein synthesis but also for the initiation of all mRNA translation through initiator tRNA(fMet) aminoacylation. The chain is Methionine--tRNA ligase from Escherichia coli (strain ATCC 8739 / DSM 1576 / NBRC 3972 / NCIMB 8545 / WDCM 00012 / Crooks).